The primary structure comprises 405 residues: MDMPSLEEQIELIERGCVDCISRDELVKKLKKSAETGIPLKVKAGFDPTAPDLHLGHTVLLQKLKQFQDLGHQVIFLIGDFTGMIGDPTGKSETRKALTVEQVAENAETYKKQVFKILDPEKTTVAFNSTWLSKLTAHEMIQLASELTVARMLEREDFKNRYESGKPISIHEFMYPLIQGYDSVALEADVEIGGTDQRFNVLMGRDLQRSRGQAPQVVLTLPLLEGLDGVNKMSKSLGNYIGITEDADSIYGKVLSVSDDLMFRYYELLSDLTTAEIADLRAQMEAGTLHPKEVKKQLARELTARYHSEEAAIAAEQNFENVFKKGGIPEDLPEYQVSLDEPIWLPKLLADAEMVKSTSEGRRMIKQGAVSLDGEKAVDESMLISPEGEVLIKVGKRRFVKVIFA.

The 'HIGH' region motif lies at 48–57; the sequence is PTAPDLHLGH. The short motif at 232 to 236 is the 'KMSKS' region element; it reads KMSKS. ATP is bound at residue K235. Residues 343-404 form the S4 RNA-binding domain; it reads IWLPKLLADA…GKRRFVKVIF (62 aa).

Belongs to the class-I aminoacyl-tRNA synthetase family. TyrS type 2 subfamily. Homodimer.

The protein localises to the cytoplasm. The catalysed reaction is tRNA(Tyr) + L-tyrosine + ATP = L-tyrosyl-tRNA(Tyr) + AMP + diphosphate + H(+). Functionally, catalyzes the attachment of tyrosine to tRNA(Tyr) in a two-step reaction: tyrosine is first activated by ATP to form Tyr-AMP and then transferred to the acceptor end of tRNA(Tyr). The protein is Tyrosine--tRNA ligase of Desulfotalea psychrophila (strain LSv54 / DSM 12343).